Reading from the N-terminus, the 435-residue chain is MSIEVDWGAATSGPDGEALAERIRSFIHDKFQQVALPRFIRSVQVHSFDFGTIPPELEIKDLCEPFADFYEEDEDDEASDVSEGLVSRHGSPWHGTHPELNESSFRDDNAINHSLRDPFTEGFQPSALRSPIALSDHLNPHFRSGTPGIPGGTSTLGYHLMSLGGLSGTQTPLAAVAGGSPFAGGWNDSGMMGPGNRGRPPPPIFTAHQSRPEADIDSSNPTSRPSTSSTLPSHPSGSNKNNGDGAGGPDHGSHPEEHGHLDDPTSEEPLRFPRMRERRPEDFQVLCHAKYAGDVRLSLTAEILLDYPMPSFVGLPLKLNVTGITFDGVAVVAYIRKRVHFCFLSSEDADALIGSDQPDVGAQTEYSRSGGDATVSAKRQGGLLQEIRVESEIGRKEDGKQVLKNVGKVERFVLAQVRRIFEEELVYPSFWTFLV.

Residues 1-435 enclose the SMP-LTD domain; the sequence is MSIEVDWGAA…VYPSFWTFLV (435 aa). Disordered stretches follow at residues 73–113 and 186–268; these read DEDD…AINH and WNDS…TSEE. A compositionally biased stretch (basic and acidic residues) spans 96–113; sequence THPELNESSFRDDNAINH. A compositionally biased stretch (low complexity) spans 218–238; that stretch reads SSNPTSRPSTSSTLPSHPSGS. Over residues 251 to 268 the composition is skewed to basic and acidic residues; the sequence is HGSHPEEHGHLDDPTSEE.

The protein belongs to the MDM12 family. Component of the ER-mitochondria encounter structure (ERMES) or MDM complex, composed of mmm1, mdm10, mdm12 and mdm34. A mmm1 homodimer associates with one molecule of mdm12 on each side in a pairwise head-to-tail manner, and the SMP-LTD domains of mmm1 and mdm12 generate a continuous hydrophobic tunnel for phospholipid trafficking.

Its subcellular location is the mitochondrion outer membrane. It is found in the endoplasmic reticulum membrane. Functionally, component of the ERMES/MDM complex, which serves as a molecular tether to connect the endoplasmic reticulum (ER) and mitochondria. Components of this complex are involved in the control of mitochondrial shape and protein biogenesis, and function in nonvesicular lipid trafficking between the ER and mitochondria. Mdm12 is required for the interaction of the ER-resident membrane protein mmm1 and the outer mitochondrial membrane-resident beta-barrel protein mdm10. The mdm12-mmm1 subcomplex functions in the major beta-barrel assembly pathway that is responsible for biogenesis of all mitochondrial outer membrane beta-barrel proteins, and acts in a late step after the SAM complex. The mdm10-mdm12-mmm1 subcomplex further acts in the TOM40-specific pathway after the action of the mdm12-mmm1 complex. Essential for establishing and maintaining the structure of mitochondria and maintenance of mtDNA nucleoids. The sequence is that of Mitochondrial distribution and morphology protein 12 from Aspergillus niger (strain ATCC MYA-4892 / CBS 513.88 / FGSC A1513).